Here is a 184-residue protein sequence, read N- to C-terminus: Potassium-transporting ATPase KdpC subunit (184 aa).

A helical membrane pass occupies residues 6–26 (TAVLYTIISAVFLGLGYPLIM).

The protein belongs to the KdpC family. As to quaternary structure, the system is composed of three essential subunits: KdpA, KdpB and KdpC.

The protein localises to the cell inner membrane. Functionally, part of the high-affinity ATP-driven potassium transport (or Kdp) system, which catalyzes the hydrolysis of ATP coupled with the electrogenic transport of potassium into the cytoplasm. This subunit acts as a catalytic chaperone that increases the ATP-binding affinity of the ATP-hydrolyzing subunit KdpB by the formation of a transient KdpB/KdpC/ATP ternary complex. The sequence is that of Potassium-transporting ATPase KdpC subunit from Acidobacterium capsulatum (strain ATCC 51196 / DSM 11244 / BCRC 80197 / JCM 7670 / NBRC 15755 / NCIMB 13165 / 161).